The following is a 523-amino-acid chain: Metalloprotease TIKI2 (523 aa).

An N-terminal signal peptide occupies residues 1–26 (MGKTMWARAVFLCFSVGTLLWQEVLT). The Extracellular portion of the chain corresponds to 27 to 499 (RRIPVDTGQC…HSQSNSSPKC (473 aa)). 4 N-linked (GlcNAc...) asparagine glycosylation sites follow: Asn225, Asn234, Asn283, and Asn341. A helical membrane pass occupies residues 500 to 516 (LSASPAFLYTLVTLCLI). Residues 517-523 (TTMRTRS) are Cytoplasmic-facing.

It belongs to the TIKI family. Mn(2+) serves as cofactor. Co(2+) is required as a cofactor.

Its subcellular location is the cell membrane. Metalloprotease that acts as a negative regulator of the Wnt signaling pathway by mediating the cleavage of the N-terminal residues of a subset of Wnt proteins. Following cleavage, Wnt proteins become oxidized and form large disulfide-bond oligomers, leading to their inactivation. Able to cleave wnt8. Required for head formation. The protein is Metalloprotease TIKI2 (trabd2b) of Xenopus tropicalis (Western clawed frog).